A 454-amino-acid polypeptide reads, in one-letter code: tRNA-2-methylthio-N(6)-dimethylallyladenosine synthase (454 aa).

Residues 6–122 form the MTTase N-terminal domain; it reads RRYHITTFGC…LKDLLESVFA (117 aa). Cys-15, Cys-51, Cys-85, Cys-157, Cys-161, and Cys-164 together coordinate [4Fe-4S] cluster. In terms of domain architecture, Radical SAM core spans 143-380; sequence RDSTVTAWVN…NHLVNVKAAE (238 aa). The TRAM domain maps to 383-447; the sequence is QRYMGRIEEV…AFSLTGEPIE (65 aa).

Belongs to the methylthiotransferase family. MiaB subfamily. As to quaternary structure, monomer. [4Fe-4S] cluster serves as cofactor.

Its subcellular location is the cytoplasm. It carries out the reaction N(6)-dimethylallyladenosine(37) in tRNA + (sulfur carrier)-SH + AH2 + 2 S-adenosyl-L-methionine = 2-methylsulfanyl-N(6)-dimethylallyladenosine(37) in tRNA + (sulfur carrier)-H + 5'-deoxyadenosine + L-methionine + A + S-adenosyl-L-homocysteine + 2 H(+). Functionally, catalyzes the methylthiolation of N6-(dimethylallyl)adenosine (i(6)A), leading to the formation of 2-methylthio-N6-(dimethylallyl)adenosine (ms(2)i(6)A) at position 37 in tRNAs that read codons beginning with uridine. The protein is tRNA-2-methylthio-N(6)-dimethylallyladenosine synthase of Nostoc sp. (strain PCC 7120 / SAG 25.82 / UTEX 2576).